We begin with the raw amino-acid sequence, 538 residues long: Chaperonin GroEL 1 (538 aa).

Residues 29–32 (TLGP), 86–90 (DGTTT), glycine 413, and aspartate 494 contribute to the ATP site.

Belongs to the chaperonin (HSP60) family. In terms of assembly, forms a cylinder of 14 subunits composed of two heptameric rings stacked back-to-back. Interacts with the co-chaperonin GroES.

Its subcellular location is the cytoplasm. The enzyme catalyses ATP + H2O + a folded polypeptide = ADP + phosphate + an unfolded polypeptide.. Together with its co-chaperonin GroES, plays an essential role in assisting protein folding. The GroEL-GroES system forms a nano-cage that allows encapsulation of the non-native substrate proteins and provides a physical environment optimized to promote and accelerate protein folding. The polypeptide is Chaperonin GroEL 1 (Mycobacterium avium (strain 104)).